Here is a 497-residue protein sequence, read N- to C-terminus: 4,4'-diaponeurosporene oxygenase (497 aa).

FAD is bound at residue 7–19 (VIGGGLGGISAAI).

The protein belongs to the carotenoid/retinoid oxidoreductase family. CrtP subfamily. The cofactor is FAD.

The enzyme catalyses all-trans-4,4'-diaponeurosporene + 2 AH2 + 2 O2 = 4,4'-diaponeurosporenal + 2 A + 3 H2O. It participates in carotenoid biosynthesis; staphyloxanthin biosynthesis; staphyloxanthin from farnesyl diphosphate: step 3/5. Involved in the biosynthesis of the yellow-orange carotenoid staphyloxanthin, which plays a role in the virulence via its protective function against oxidative stress. Catalyzes the oxidation of the terminal methyl side group of 4,4'-diaponeurosporene to form 4,4'-diaponeurosporen-4-al. In Staphylococcus aureus (strain MSSA476), this protein is 4,4'-diaponeurosporene oxygenase.